A 381-amino-acid polypeptide reads, in one-letter code: Chaperone protein DnaJ (381 aa).

One can recognise a J domain in the interval 5-70 (DYYEVLGCDR…QKRGAYDRYG (66 aa)). The CR-type zinc-finger motif lies at 136 to 214 (GKTAQISIPT…CGGAGRVTRE (79 aa)). Zn(2+) contacts are provided by Cys-149, Cys-152, Cys-166, Cys-169, Cys-188, Cys-191, Cys-202, and Cys-205. CXXCXGXG motif repeat units lie at residues 149–156 (CEVCSGSG), 166–173 (CRTCNGAG), 188–195 (CPSCQGRG), and 202–209 (CPNCGGAG).

This sequence belongs to the DnaJ family. As to quaternary structure, homodimer. Requires Zn(2+) as cofactor.

It localises to the cytoplasm. Participates actively in the response to hyperosmotic and heat shock by preventing the aggregation of stress-denatured proteins and by disaggregating proteins, also in an autonomous, DnaK-independent fashion. Unfolded proteins bind initially to DnaJ; upon interaction with the DnaJ-bound protein, DnaK hydrolyzes its bound ATP, resulting in the formation of a stable complex. GrpE releases ADP from DnaK; ATP binding to DnaK triggers the release of the substrate protein, thus completing the reaction cycle. Several rounds of ATP-dependent interactions between DnaJ, DnaK and GrpE are required for fully efficient folding. Also involved, together with DnaK and GrpE, in the DNA replication of plasmids through activation of initiation proteins. This chain is Chaperone protein DnaJ, found in Azorhizobium caulinodans (strain ATCC 43989 / DSM 5975 / JCM 20966 / LMG 6465 / NBRC 14845 / NCIMB 13405 / ORS 571).